We begin with the raw amino-acid sequence, 78 residues long: Large ribosomal subunit protein bL28 (78 aa).

It belongs to the bacterial ribosomal protein bL28 family.

This chain is Large ribosomal subunit protein bL28, found in Proteus mirabilis (strain HI4320).